Here is a 338-residue protein sequence, read N- to C-terminus: Ketol-acid reductoisomerase (NADP(+)) (338 aa).

In terms of domain architecture, KARI N-terminal Rossmann spans 1-181 (MQIFYDKDCD…GGGRTGIIET (181 aa)). NADP(+) is bound by residues 24–27 (YGSQ), arginine 47, serine 50, serine 52, and 82–85 (DEFQ). Histidine 107 is a catalytic residue. Glycine 133 lines the NADP(+) pocket. Residues 182-327 (SFREETETDL…AKLRAMMPWI (146 aa)) enclose the KARI C-terminal knotted domain. Aspartate 190, glutamate 194, glutamate 226, and glutamate 230 together coordinate Mg(2+). Substrate is bound at residue serine 251.

The protein belongs to the ketol-acid reductoisomerase family. Mg(2+) is required as a cofactor.

It carries out the reaction (2R)-2,3-dihydroxy-3-methylbutanoate + NADP(+) = (2S)-2-acetolactate + NADPH + H(+). The enzyme catalyses (2R,3R)-2,3-dihydroxy-3-methylpentanoate + NADP(+) = (S)-2-ethyl-2-hydroxy-3-oxobutanoate + NADPH + H(+). It participates in amino-acid biosynthesis; L-isoleucine biosynthesis; L-isoleucine from 2-oxobutanoate: step 2/4. It functions in the pathway amino-acid biosynthesis; L-valine biosynthesis; L-valine from pyruvate: step 2/4. Functionally, involved in the biosynthesis of branched-chain amino acids (BCAA). Catalyzes an alkyl-migration followed by a ketol-acid reduction of (S)-2-acetolactate (S2AL) to yield (R)-2,3-dihydroxy-isovalerate. In the isomerase reaction, S2AL is rearranged via a Mg-dependent methyl migration to produce 3-hydroxy-3-methyl-2-ketobutyrate (HMKB). In the reductase reaction, this 2-ketoacid undergoes a metal-dependent reduction by NADPH to yield (R)-2,3-dihydroxy-isovalerate. The sequence is that of Ketol-acid reductoisomerase (NADP(+)) from Acinetobacter baumannii (strain AB0057).